We begin with the raw amino-acid sequence, 900 residues long: Probable dipeptidyl-aminopeptidase B (900 aa).

The disordered stretch occupies residues 1–83 (MARTDQGLGA…DILSHPRDKS (83 aa)). Over 1-90 (MARTDQGLGA…DKSKRSRGSR (90 aa)) the chain is Cytoplasmic. Low complexity predominate over residues 24–39 (NSFSSTDSLSTDGSLF). The span at 44–55 (NATQFQKSTQLP) shows a compositional bias: polar residues. A helical; Signal-anchor for type II membrane protein membrane pass occupies residues 91–111 (WIWVIGLLCLGGWILAFILFW). Residues 112–900 (GRRNNNSDIS…HHVGSALAAT (789 aa)) are Vacuolar-facing. 7 N-linked (GlcNAc...) asparagine glycosylation sites follow: asparagine 150, asparagine 195, asparagine 348, asparagine 410, asparagine 514, asparagine 639, and asparagine 644. Serine 753 functions as the Charge relay system in the catalytic mechanism. N-linked (GlcNAc...) asparagine glycosylation occurs at asparagine 812. Residues aspartate 830 and histidine 863 each act as charge relay system in the active site.

This sequence belongs to the peptidase S9B family.

Its subcellular location is the vacuole membrane. The enzyme catalyses Release of an N-terminal dipeptide, Xaa-Yaa-|-Zaa-, from a polypeptide, preferentially when Yaa is Pro, provided Zaa is neither Pro nor hydroxyproline.. Its function is as follows. Type IV dipeptidyl-peptidase which removes N-terminal dipeptides sequentially from polypeptides having unsubstituted N-termini provided that the penultimate residue is proline. The sequence is that of Probable dipeptidyl-aminopeptidase B (dapB) from Talaromyces stipitatus (strain ATCC 10500 / CBS 375.48 / QM 6759 / NRRL 1006) (Penicillium stipitatum).